Consider the following 285-residue polypeptide: Zinc transporter ZupT (285 aa).

3 helical membrane passes run 13-33 (AFLL…IAFF), 41-61 (FLCV…MIEM), and 80-100 (WITV…DKFV). Fe(2+)-binding residues include Asn-153 and Glu-156. Glu-156 serves as a coordination point for Zn(2+). A helical transmembrane segment spans residues 160–180 (TFVSALEGASLAIPITIAIAI). Residue His-181 coordinates Zn(2+). The Fe(2+) site is built by Asn-182, Glu-185, and Glu-214. Glu-185 serves as a coordination point for Zn(2+). 3 consecutive transmembrane segments (helical) span residues 204-224 (FLYS…GYTL), 228-248 (IFND…MVFI), and 265-285 (LAIY…LLFI).

The protein belongs to the ZIP transporter (TC 2.A.5) family. ZupT subfamily.

It is found in the cell membrane. It carries out the reaction Zn(2+)(in) = Zn(2+)(out). Functionally, mediates zinc uptake. May also transport other divalent cations. The chain is Zinc transporter ZupT from Clostridium perfringens (strain 13 / Type A).